Consider the following 349-residue polypeptide: Early nodulin-like protein 2 (349 aa).

Positions 1–28 are cleaved as a signal peptide; it reads MTFLKMKSLSFFFTILLSLSTLFTISNA. Residues 29 to 130 form the Phytocyanin domain; that stretch reads RKFNVGGSGA…GQKLNVVVIS (102 aa). Cysteine 84 and cysteine 118 are joined by a disulfide. The disordered stretch occupies residues 136-330; sequence TAQSPHAAAP…GQKKSSANGM (195 aa). Composition is skewed to low complexity over residues 145 to 201 and 224 to 234; these read PGSS…SPPG and TSPVSPSSAPM. A compositionally biased stretch (polar residues) spans 249 to 260; sequence IPPSSAPMTSPP. Residues 263-312 show a composition bias toward low complexity; sequence MAPKSSSPVSNSPTVSPSLAPGGSTSSSPSDSPSGSAMGPSGDGPSAAGD. The GPI-anchor amidated serine moiety is linked to residue serine 325. Residues 326 to 349 constitute a propeptide, removed in mature form; the sequence is SANGMTVMSITTVLSLVLTIFLSA.

It belongs to the early nodulin-like (ENODL) family. As to expression, mostly expressed in leaves and roots, and, to a lower extent, in seedlings, stems and flowers, but barely in seeds.

The protein resides in the cell membrane. In terms of biological role, may act as a carbohydrate transporter. In Arabidopsis thaliana (Mouse-ear cress), this protein is Early nodulin-like protein 2.